The following is a 477-amino-acid chain: Putative multidrug resistance protein MdtD (477 aa).

The next 14 helical transmembrane spans lie at 13–33 (LWIV…VNTA), 50–70 (SVIV…GWLA), 73–93 (VGVQ…SILC), 107–127 (VVQG…VMKI), 139–159 (FVTL…GFLV), 166–186 (WIFL…LLLM), 196–216 (FDIS…LALD), 220–240 (GMGL…AALA), 268–288 (LTAS…TPLF), 291–311 (VGMG…IIGS), 326–348 (GYRN…FPLV), 352–374 (GWIW…RFSA), 394–414 (LLSM…GILI), and 432–452 (AFIY…LAFA).

Belongs to the major facilitator superfamily. TCR/Tet family.

The protein resides in the cell inner membrane. This chain is Putative multidrug resistance protein MdtD, found in Serratia proteamaculans (strain 568).